Reading from the N-terminus, the 190-residue chain is Ganglioside GM2 activator (190 aa).

The first 23 residues, 1 to 23 (MQSLMQAPVLIALGLLFAAPAQA), serve as a signal peptide directing secretion. Disulfide bonds link Cys36–Cys180, Cys96–Cys103, Cys109–Cys135, and Cys122–Cys133. N-linked (GlcNAc...) asparagine glycosylation is present at Asn60.

The protein localises to the lysosome. It carries out the reaction cholesterol(in) = cholesterol(out). Functionally, the large binding pocket can accommodate several single chain phospholipids and fatty acids, GM2A also exhibits some calcium-independent phospholipase activity. Binds gangliosides and stimulates ganglioside GM2 degradation. It stimulates only the breakdown of ganglioside GM2 and glycolipid GA2 by beta-hexosaminidase A. It extracts single GM2 molecules from membranes and presents them in soluble form to beta-hexosaminidase A for cleavage of N-acetyl-D-galactosamine and conversion to GM3. Has cholesterol transfer activity. This is Ganglioside GM2 activator (GM2A) from Macaca fascicularis (Crab-eating macaque).